Here is a 58-residue protein sequence, read N- to C-terminus: UPF0391 membrane protein Sputcn32_1322 (58 aa).

2 consecutive transmembrane segments (helical) span residues 6–26 (LMFL…IAGA) and 28–48 (AGIA…SLLV).

Belongs to the UPF0391 family.

The protein localises to the cell membrane. The sequence is that of UPF0391 membrane protein Sputcn32_1322 from Shewanella putrefaciens (strain CN-32 / ATCC BAA-453).